The sequence spans 242 residues: 4-hydroxy-tetrahydrodipicolinate reductase (242 aa).

NAD(+) is bound by residues Gly-8–Met-13, Gly-75–Thr-77, and Ala-99–Met-102. Catalysis depends on His-131, which acts as the Proton donor/acceptor. A (S)-2,3,4,5-tetrahydrodipicolinate-binding site is contributed by His-132. Lys-135 (proton donor) is an active-site residue. Gly-141–Thr-142 serves as a coordination point for (S)-2,3,4,5-tetrahydrodipicolinate.

The protein belongs to the DapB family.

The protein localises to the cytoplasm. The enzyme catalyses (S)-2,3,4,5-tetrahydrodipicolinate + NAD(+) + H2O = (2S,4S)-4-hydroxy-2,3,4,5-tetrahydrodipicolinate + NADH + H(+). The catalysed reaction is (S)-2,3,4,5-tetrahydrodipicolinate + NADP(+) + H2O = (2S,4S)-4-hydroxy-2,3,4,5-tetrahydrodipicolinate + NADPH + H(+). The protein operates within amino-acid biosynthesis; L-lysine biosynthesis via DAP pathway; (S)-tetrahydrodipicolinate from L-aspartate: step 4/4. In terms of biological role, catalyzes the conversion of 4-hydroxy-tetrahydrodipicolinate (HTPA) to tetrahydrodipicolinate. This is 4-hydroxy-tetrahydrodipicolinate reductase from Campylobacter lari (strain RM2100 / D67 / ATCC BAA-1060).